The chain runs to 98 residues: NADH-ubiquinone oxidoreductase chain 4L (98 aa).

3 helical membrane-spanning segments follow: residues 1-21 (MSMV…GLLM), 29-49 (SLLC…VTIL), and 61-81 (IILL…LVMV).

This sequence belongs to the complex I subunit 4L family. In terms of assembly, core subunit of respiratory chain NADH dehydrogenase (Complex I) which is composed of 45 different subunits.

The protein localises to the mitochondrion inner membrane. It catalyses the reaction a ubiquinone + NADH + 5 H(+)(in) = a ubiquinol + NAD(+) + 4 H(+)(out). Functionally, core subunit of the mitochondrial membrane respiratory chain NADH dehydrogenase (Complex I) which catalyzes electron transfer from NADH through the respiratory chain, using ubiquinone as an electron acceptor. Part of the enzyme membrane arm which is embedded in the lipid bilayer and involved in proton translocation. The protein is NADH-ubiquinone oxidoreductase chain 4L (MT-ND4L) of Phoca fasciata (Ribbon seal).